Consider the following 306-residue polypeptide: UDP-N-acetylenolpyruvoylglucosamine reductase (306 aa).

The FAD-binding PCMH-type domain maps to 34–199; that stretch reads KSGGAAEWLF…VAATFRGHAE (166 aa). R179 is a catalytic residue. Residues 215-234 form a disordered region; it reads REASQPLRSRTGGSTFKNPQ. Over residues 220 to 232 the composition is skewed to polar residues; the sequence is PLRSRTGGSTFKN. S228 serves as the catalytic Proton donor. The active site involves E298.

Belongs to the MurB family. The cofactor is FAD.

It localises to the cytoplasm. It catalyses the reaction UDP-N-acetyl-alpha-D-muramate + NADP(+) = UDP-N-acetyl-3-O-(1-carboxyvinyl)-alpha-D-glucosamine + NADPH + H(+). The protein operates within cell wall biogenesis; peptidoglycan biosynthesis. Functionally, cell wall formation. The protein is UDP-N-acetylenolpyruvoylglucosamine reductase of Rhizorhabdus wittichii (strain DSM 6014 / CCUG 31198 / JCM 15750 / NBRC 105917 / EY 4224 / RW1) (Sphingomonas wittichii).